Here is a 293-residue protein sequence, read N- to C-terminus: Short-chain dehydrogenase/reductase PhomF' (293 aa).

Residues isoleucine 31 and asparagine 102 each contribute to the NADP(+) site. The active-site Proton donor is serine 175. 3 residues coordinate NADP(+): tyrosine 190, lysine 194, and serine 225. Residue tyrosine 190 is the Proton acceptor of the active site. Lysine 194 functions as the Lowers pKa of active site Tyr in the catalytic mechanism.

It belongs to the short-chain dehydrogenases/reductases (SDR) family.

Functionally, short-chain dehydrogenase/reductase; part of the gene cluster that mediates the biosynthesis of the phomopsins, a group of hexapeptide mycotoxins which infects lupins and causes lupinosis disease in livestock. The role of phomF' within the phomopsins biosynthesis pathway has still to be determined. The pathway starts with the processing of the precursor phomA by several endopeptidases including kexin proteases as well as the cluster-specific S41 family peptidase phomP1 and the oligopeptidase phomG to produce 10 identical copies of the hexapeptide Tyr-Val-Ile-Pro-Ile-Asp. After being excised from the precursor peptide, the core peptides are cyclized and modified post-translationally by enzymes encoded within the gene cluster. The timing and order of proteolysis of the phomA precursor and PTMs are still unknown. Two tyrosinase-like enzymes, phomQ1 and phomQ2, catalyze the chlorination and hydroxylation of Tyr, respectively. PhomYb, is proposed to be involved in the construction of the macrocyclic structure. The other 4 ustYa family proteins may be involved in PTMs that generate the unique structure of phomopsin A. PhomYa is required for the hydroxylation of C-beta of Tyr. PhomYc, phomYd, and phomYe are responsible for the biosynthesis of 2,3-dehydroisoleucine (dIle), 2,3-dehydroaspartic acid (dAsp), and 3,4-dehydroproline (dPro), respectively. While dIle formation by phomYc is indispensable for the installation of dAsp by phomYd, the order of the other PTMs have not been elucidated yet. Most of the biosynthetic enzymes likely have broad substrate specificity, and thus, there might be a metabolic grid from a precursor to phomopsin A. The enzyme(s) responsible for the biosynthesis of 3,4-dehydrovaline (dVal) have also not been identified yet. Finally, phomM acts as an S-adenosylmethionine-dependent alpha-N-methyltransferase that catalyzes two successive N-methylation reactions, converting N-desmethyl-phomopsin A to phomopsin A and phomopsin A further to an N,N-dimethylated congener called phomopsin E. The sequence is that of Short-chain dehydrogenase/reductase PhomF' from Diaporthe leptostromiformis (Lupinosis disease fungus).